A 156-amino-acid polypeptide reads, in one-letter code: 6,7-dimethyl-8-ribityllumazine synthase (156 aa).

5-amino-6-(D-ribitylamino)uracil contacts are provided by residues Phe-23, 57-59, and 81-83; these read AYE and AVI. Position 86 to 87 (86 to 87) interacts with (2S)-2-hydroxy-3-oxobutyl phosphate; it reads ST. Catalysis depends on His-89, which acts as the Proton donor. A 5-amino-6-(D-ribitylamino)uracil-binding site is contributed by Phe-114. (2S)-2-hydroxy-3-oxobutyl phosphate is bound at residue Arg-128.

Belongs to the DMRL synthase family.

The catalysed reaction is (2S)-2-hydroxy-3-oxobutyl phosphate + 5-amino-6-(D-ribitylamino)uracil = 6,7-dimethyl-8-(1-D-ribityl)lumazine + phosphate + 2 H2O + H(+). It participates in cofactor biosynthesis; riboflavin biosynthesis; riboflavin from 2-hydroxy-3-oxobutyl phosphate and 5-amino-6-(D-ribitylamino)uracil: step 1/2. Catalyzes the formation of 6,7-dimethyl-8-ribityllumazine by condensation of 5-amino-6-(D-ribitylamino)uracil with 3,4-dihydroxy-2-butanone 4-phosphate. This is the penultimate step in the biosynthesis of riboflavin. In Helicobacter hepaticus (strain ATCC 51449 / 3B1), this protein is 6,7-dimethyl-8-ribityllumazine synthase.